The chain runs to 435 residues: MTNYHFTGIKGSGMSALAQILHDLNENVQGSDIEETIFTQKPLERKGITLLPFSRDNIKNGQHVIVSAAYGETHEEIKRARELGLKVDVYPEFLGSFIKQFTSIAVSGSHGKTSTTGLLAHVLGSVEPTSYLIGDGTGKGAANSTYFVFEACEYRRHFLNYSPDYCVMTNIDFDHPDYFKSVEDVVSAFQTMAKQVNKAIIACGDDEHLQTLQANVPIVYYGLGDHNDFQAKSIKNTPEGTAFDAWVRGDLFGSFVIPGFGDHNVKNALSVIALCHYEGIGYEDIVEHLKTFAGVKRRFSEKRSGKQILIDDYAHHPTEIAATIEATKKKYHDREVTAIFQPHTFTRTKTFLNEFAEALSQADHVYLCDIFGSAREEQGSLSIEQLQALVDGAKLLTEAEIETLKGHGESVLLFMGAGDIQKYQKAYEALIESSS.

An ATP-binding site is contributed by 108–114 (GSHGKTS).

This sequence belongs to the MurCDEF family.

Its subcellular location is the cytoplasm. The catalysed reaction is UDP-N-acetyl-alpha-D-muramate + L-alanine + ATP = UDP-N-acetyl-alpha-D-muramoyl-L-alanine + ADP + phosphate + H(+). The protein operates within cell wall biogenesis; peptidoglycan biosynthesis. In terms of biological role, cell wall formation. The polypeptide is UDP-N-acetylmuramate--L-alanine ligase (Shouchella clausii (strain KSM-K16) (Alkalihalobacillus clausii)).